Reading from the N-terminus, the 116-residue chain is Cation channel sperm-associated auxiliary subunit TMEM262 (116 aa).

Residues 1 to 16 (MRWRDRIAVLCFPPGL) are Cytoplasmic-facing. A helical membrane pass occupies residues 17–38 (MLTVAALILFFIHMGVFASDVH). Topologically, residues 39–51 (NFCVIHNYDHMSF) are extracellular. A helical membrane pass occupies residues 52–72 (RYTVVLIFSQVISIGWAAMGS). At 73–84 (LYAEMTGDKFLR) the chain is on the cytoplasmic side. Residues 85–107 (CFALTILILNGAMFFNRLCLEFL) traverse the membrane as a helical segment. Over 108-116 (AINYREERH) the chain is Extracellular.

As to quaternary structure, component of the CatSper complex or CatSpermasome composed of the core pore-forming members CATSPER1, CATSPER2, CATSPER3 and CATSPER4 as well as auxiliary members CATSPERB, CATSPERG, CATSPERD, CATSPERE, CATSPERZ, C2CD6/CATSPERT, SLCO6C1, TMEM249, TMEM262 and EFCAB9. HSPA1 may be an additional auxiliary complex member. The core complex members CATSPER1, CATSPER2, CATSPER3 and CATSPER4 form a heterotetrameric channel. The auxiliary CATSPERB, CATSPERG2, CATSPERD and CATSPERE subunits form a pavilion-like structure over the pore which stabilizes the complex through interactions with CATSPER4, CATSPER3, CATSPER1 and CATSPER2 respectively. SLCO6C1 interacts with CATSPERE and TMEM262/CATSPERH interacts with CATSPERB, further stabilizing the complex. C2CD6/CATSPERT interacts at least with CATSPERD and is required for targeting the CatSper complex in the flagellar membrane.

It is found in the cell projection. The protein localises to the cilium. Its subcellular location is the flagellum membrane. Auxiliary component of the CatSper complex, a complex involved in sperm cell hyperactivation. The sequence is that of Cation channel sperm-associated auxiliary subunit TMEM262 from Mus musculus (Mouse).